The primary structure comprises 129 residues: Ig lambda-1 chain V region S43 (129 aa).

Positions 1-19 (MAWISLILSLLALSSGAIS) are cleaved as a signal peptide. Residue Q20 is modified to Pyrrolidone carboxylic acid. The Ig-like domain occupies 20–125 (QAVVTQESAL…HWVFGGGTKL (106 aa)).

This is Ig lambda-1 chain V region S43 from Mus musculus (Mouse).